We begin with the raw amino-acid sequence, 33 residues long: Cytochrome b6-f complex subunit 6 (33 aa).

A helical membrane pass occupies residues 4-24; that stretch reads ITIISYFGLLLASIIFTLVLF.

This sequence belongs to the PetL family. The 4 large subunits of the cytochrome b6-f complex are cytochrome b6, subunit IV (17 kDa polypeptide, PetD), cytochrome f and the Rieske protein, while the 4 small subunits are PetG, PetL, PetM and PetN. The complex functions as a dimer.

The protein localises to the plastid. The protein resides in the chloroplast thylakoid membrane. Functionally, component of the cytochrome b6-f complex, which mediates electron transfer between photosystem II (PSII) and photosystem I (PSI), cyclic electron flow around PSI, and state transitions. PetL is important for photoautotrophic growth as well as for electron transfer efficiency and stability of the cytochrome b6-f complex. This chain is Cytochrome b6-f complex subunit 6, found in Pinus mugo (Dwarf mountain pine).